Consider the following 133-residue polypeptide: Basic leucine zipper transcriptional factor ATF-like 3 (133 aa).

The segment at methionine 1–serine 68 is disordered. Phosphoserine is present on residues serine 2 and serine 24. The segment covering leucine 11–serine 24 has biased composition (polar residues). The bZIP domain occupies aspartate 28–histidine 91. The basic motif stretch occupies residues arginine 30–lysine 55. The segment covering glutamine 51–serine 68 has biased composition (basic and acidic residues). The interval leucine 56–leucine 84 is leucine-zipper.

Belongs to the bZIP family. As to quaternary structure, heterodimer; heterodimerizes with JUN family proteins. Interacts with JUN. As to expression, ubiquitously expressed.

The protein resides in the nucleus. In terms of biological role, AP-1 family transcription factor that controls the differentiation of CD8(+) thymic conventional dendritic cells in the immune system. Acts via the formation of a heterodimer with JUN family proteins that recognizes and binds DNA sequence 5'-TGA[CG]TCA-3' and regulates expression of target genes. Required for development of CD8-alpha(+) classical dendritic cells (cDCs) and related CD103(+) dendritic cells that cross-present antigens to CD8 T-cells and produce interleukin-12 (IL12) in response to pathogens. This Rattus norvegicus (Rat) protein is Basic leucine zipper transcriptional factor ATF-like 3 (Batf3).